A 172-amino-acid chain; its full sequence is MISDLRSSILPPLKWLSDQDPPVPAGVSDWLMELGSMTRRFENHCTCIRIEPQRECFITRDNLKEEAAHLPNSTCYWLREVILMGDNQPWLLGRTVIPQETLFEHNEALINLGTVPLGRYLFSSGNLTRDYIYIGRQGALWARRSRLRLAGKPLLLTELFLAASPLYTTNSI.

Positions 37, 79, 117, and 158 each coordinate substrate.

This sequence belongs to the UbiC family.

The protein localises to the cytoplasm. It carries out the reaction chorismate = 4-hydroxybenzoate + pyruvate. Its pathway is cofactor biosynthesis; ubiquinone biosynthesis. Its function is as follows. Removes the pyruvyl group from chorismate, with concomitant aromatization of the ring, to provide 4-hydroxybenzoate (4HB) for the ubiquinone pathway. The sequence is that of Probable chorismate pyruvate-lyase from Bartonella quintana (strain Toulouse) (Rochalimaea quintana).